Consider the following 528-residue polypeptide: NAD(P)H-quinone oxidoreductase chain 4 1 (528 aa).

Transmembrane regions (helical) follow at residues 7–27 (FPWL…IPLI), 32–52 (WVRW…AYVF), 86–106 (LSLP…VAAW), 114–134 (LFFF…LAQD), 136–156 (LLFF…ISIW), 168–188 (FILY…AMAF), 208–228 (ALEL…LPIF), 242–262 (SAPI…YGLI), 276–296 (FAPV…LAAF), 310–330 (IAHM…GING), 331–351 (AVLQ…LTGI), 375–395 (FALF…SGFV), 417–437 (GIAL…LSML), and 463–483 (MAVA…PRLA).

Belongs to the complex I subunit 4 family.

Its subcellular location is the cellular thylakoid membrane. The catalysed reaction is a plastoquinone + NADH + (n+1) H(+)(in) = a plastoquinol + NAD(+) + n H(+)(out). The enzyme catalyses a plastoquinone + NADPH + (n+1) H(+)(in) = a plastoquinol + NADP(+) + n H(+)(out). Functionally, NDH-1 shuttles electrons from NAD(P)H, via FMN and iron-sulfur (Fe-S) centers, to quinones in the respiratory chain. The immediate electron acceptor for the enzyme in this species is believed to be plastoquinone. Couples the redox reaction to proton translocation (for every two electrons transferred, four hydrogen ions are translocated across the cytoplasmic membrane), and thus conserves the redox energy in a proton gradient. In Synechococcus sp. (strain JA-2-3B'a(2-13)) (Cyanobacteria bacterium Yellowstone B-Prime), this protein is NAD(P)H-quinone oxidoreductase chain 4 1.